We begin with the raw amino-acid sequence, 499 residues long: Pentatricopeptide repeat-containing protein At5g61800 (499 aa).

10 PPR repeats span residues 78-113, 114-150, 151-181, 182-212, 213-247, 248-282, 283-313, 314-348, 349-379, and 385-419; these read STFCFNTIIRICTLHEPSSLSSKRFFVEMRRRSVPP, DFHTFPFVFKACAAKKNGDLTLVKTLHCQALRFGLLS, DLFTLNTLIRVYSLIAPIDSALQLFDENPQR, DVVTYNVLIDGLVKAREIVRARELFDSMPLR, DLVSWNSLISGYAQMNHCREAIKLFDEMVALGLKP, DNVAIVSTLSACAQSGDWQKGKAIHDYTKRKRLFI, DSFLATGLVDFYAKCGFIDTAMEIFELCSDK, TLFTWNAMITGLAMHGNGELTVDYFRKMVSSGIKP, DGVTFISVLVGCSHSGLVDEARNLFDQMRSL, and EMKHYGCMADLLGRAGLIEEAAEMIEQMPKDGGNR. A type E motif region spans residues 424–499; that stretch reads AWSGLLGGCR…KNVGFSKVLS (76 aa).

Belongs to the PPR family. PCMP-E subfamily.

This is Pentatricopeptide repeat-containing protein At5g61800 (PCMP-E8) from Arabidopsis thaliana (Mouse-ear cress).